The sequence spans 539 residues: Glucose-6-phosphate isomerase (539 aa).

Glu-353 acts as the Proton donor in catalysis. Residues His-384 and Lys-505 contribute to the active site.

This sequence belongs to the GPI family.

The protein resides in the cytoplasm. It carries out the reaction alpha-D-glucose 6-phosphate = beta-D-fructose 6-phosphate. The protein operates within carbohydrate biosynthesis; gluconeogenesis. It functions in the pathway carbohydrate degradation; glycolysis; D-glyceraldehyde 3-phosphate and glycerone phosphate from D-glucose: step 2/4. Functionally, catalyzes the reversible isomerization of glucose-6-phosphate to fructose-6-phosphate. The sequence is that of Glucose-6-phosphate isomerase from Ralstonia nicotianae (strain ATCC BAA-1114 / GMI1000) (Ralstonia solanacearum).